A 225-amino-acid polypeptide reads, in one-letter code: Uracil-DNA glycosylase (225 aa).

The active-site Proton acceptor is the Asp-65.

The protein belongs to the uracil-DNA glycosylase (UDG) superfamily. UNG family.

It localises to the cytoplasm. The catalysed reaction is Hydrolyzes single-stranded DNA or mismatched double-stranded DNA and polynucleotides, releasing free uracil.. Excises uracil residues from the DNA which can arise as a result of misincorporation of dUMP residues by DNA polymerase or due to deamination of cytosine. In Bacillus licheniformis (strain ATCC 14580 / DSM 13 / JCM 2505 / CCUG 7422 / NBRC 12200 / NCIMB 9375 / NCTC 10341 / NRRL NRS-1264 / Gibson 46), this protein is Uracil-DNA glycosylase.